The chain runs to 353 residues: Peroxidase C1A (353 aa).

The signal sequence occupies residues 1-30; it reads MHFSSSSTLFTCITLIPLVCLILHASLSDA. At Q31 the chain carries Pyrrolidone carboxylic acid. 4 disulfides stabilise this stretch: C41-C121, C74-C79, C127-C331, and C207-C239. N43 is a glycosylation site (N-linked (GlcNAc...) asparagine). H72 functions as the Proton acceptor in the catalytic mechanism. Ca(2+) is bound by residues D73, V76, G78, D80, and S82. Residue N87 is glycosylated (N-linked (GlcNAc...) asparagine). E94 contacts Ca(2+). A substrate-binding site is contributed by P169. N-linked (GlcNAc...) asparagine glycosylation is present at N188. H200 lines the heme b pocket. A Ca(2+)-binding site is contributed by T201. 3 N-linked (GlcNAc...) asparagine glycosylation sites follow: N216, N228, and N244. Residues D252, T255, and D260 each coordinate Ca(2+). N285 and N298 each carry an N-linked (GlcNAc...) asparagine glycan. Residues 339–353 constitute a propeptide that is removed on maturation; it reads LLHDMVEVVDFVSSM.

Belongs to the peroxidase family. Classical plant (class III) peroxidase subfamily. As to quaternary structure, monomer. Requires Ca(2+) as cofactor. Heme b serves as cofactor.

It is found in the secreted. Its subcellular location is the vacuole. It carries out the reaction 2 a phenolic donor + H2O2 = 2 a phenolic radical donor + 2 H2O. In terms of biological role, removal of H(2)O(2), oxidation of toxic reductants, biosynthesis and degradation of lignin, suberization, auxin catabolism, response to environmental stresses such as wounding, pathogen attack and oxidative stress. These functions might be dependent on each isozyme/isoform in each plant tissue. This Armoracia rusticana (Horseradish) protein is Peroxidase C1A (PRXC1A).